Reading from the N-terminus, the 102-residue chain is Small ribosomal subunit protein uS10 (102 aa).

It belongs to the universal ribosomal protein uS10 family. As to quaternary structure, part of the 30S ribosomal subunit.

In terms of biological role, involved in the binding of tRNA to the ribosomes. This chain is Small ribosomal subunit protein uS10, found in Finegoldia magna (strain ATCC 29328 / DSM 20472 / WAL 2508) (Peptostreptococcus magnus).